A 73-amino-acid polypeptide reads, in one-letter code: Crustacean hyperglycemic hormone (73 aa).

3 disulfides stabilise this stretch: Cys7–Cys43, Cys23–Cys39, and Cys26–Cys52. Val73 is modified (valine amide).

This sequence belongs to the arthropod CHH/MIH/GIH/VIH hormone family. Produced by the medulla terminalis X-organ in the eyestalks and transported to the sinus gland where they are stored and released.

It localises to the secreted. Functionally, hormone found in the sinus gland of isopods and decapods which controls the blood sugar level. Has a secretagogue action over the amylase released from the midgut gland. May act as a stress hormone and may be involved in the control of molting and reproduction. The polypeptide is Crustacean hyperglycemic hormone (Jasus lalandii (Cape rock lobster)).